A 119-amino-acid chain; its full sequence is MALKIRLRQQGRRNHVVYRLVLADVESPRDGRYIELLGWYDPHSTVNYQLKSDRIFHWLNQGAELTEKAAILIKQGAPGVYCELMAKRMARKAAVCQKRRAYRQRRSLKRAEAKQSVVN.

This sequence belongs to the bacterial ribosomal protein bS16 family.

The protein is Small ribosomal subunit protein bS16 of Chlamydia abortus (strain DSM 27085 / S26/3) (Chlamydophila abortus).